The following is a 144-amino-acid chain: Small ribosomal subunit protein uS19 (144 aa).

Belongs to the universal ribosomal protein uS19 family.

In terms of biological role, protein S19 forms a complex with S13 that binds strongly to the 16S ribosomal RNA. The chain is Small ribosomal subunit protein uS19 (rps19) from Aeropyrum pernix (strain ATCC 700893 / DSM 11879 / JCM 9820 / NBRC 100138 / K1).